We begin with the raw amino-acid sequence, 91 residues long: DNA-directed RNA polymerase subunit omega (91 aa).

Belongs to the RNA polymerase subunit omega family. The RNAP catalytic core consists of 2 alpha, 1 beta, 1 beta' and 1 omega subunit. When a sigma factor is associated with the core the holoenzyme is formed, which can initiate transcription.

The enzyme catalyses RNA(n) + a ribonucleoside 5'-triphosphate = RNA(n+1) + diphosphate. Its function is as follows. Promotes RNA polymerase assembly. Latches the N- and C-terminal regions of the beta' subunit thereby facilitating its interaction with the beta and alpha subunits. The chain is DNA-directed RNA polymerase subunit omega from Pectobacterium atrosepticum (strain SCRI 1043 / ATCC BAA-672) (Erwinia carotovora subsp. atroseptica).